The sequence spans 120 residues: uncharacterized protein (120 aa).

A helical transmembrane segment spans residues serine 40 to tryptophan 62.

Its subcellular location is the membrane. This is an uncharacterized protein from Saccharomyces cerevisiae (strain ATCC 204508 / S288c) (Baker's yeast).